The primary structure comprises 356 residues: tRNA N6-adenosine threonylcarbamoyltransferase (356 aa).

The Fe cation site is built by histidine 115 and histidine 119. Substrate contacts are provided by residues 137–141 (LVSGG), aspartate 170, glycine 183, and asparagine 280. Aspartate 308 is a binding site for Fe cation.

The protein belongs to the KAE1 / TsaD family. The cofactor is Fe(2+).

The protein resides in the cytoplasm. It catalyses the reaction L-threonylcarbamoyladenylate + adenosine(37) in tRNA = N(6)-L-threonylcarbamoyladenosine(37) in tRNA + AMP + H(+). Its function is as follows. Required for the formation of a threonylcarbamoyl group on adenosine at position 37 (t(6)A37) in tRNAs that read codons beginning with adenine. Is involved in the transfer of the threonylcarbamoyl moiety of threonylcarbamoyl-AMP (TC-AMP) to the N6 group of A37, together with TsaE and TsaB. TsaD likely plays a direct catalytic role in this reaction. The chain is tRNA N6-adenosine threonylcarbamoyltransferase from Paracoccus denitrificans (strain Pd 1222).